The sequence spans 631 residues: Probable sulfate transporter 3.3 (631 aa).

The Cytoplasmic portion of the chain corresponds to 1–69; it reads MEVHKVVAPP…EYSFSLLKSD (69 aa). A helical membrane pass occupies residues 70-90; it reads VVSGLTIASLAIPQGISYAKL. The Extracellular segment spans residues 91-92; sequence AN. A helical membrane pass occupies residues 93 to 113; sequence LPPIVGLYSSFVPPLVYAVLG. Over 114 to 117 the chain is Cytoplasmic; that stretch reads SSRD. A helical transmembrane segment spans residues 118 to 138; the sequence is LAVGPVSIASLILGSMLRQQV. Over 139–144 the chain is Extracellular; it reads SPVDDP. A helical membrane pass occupies residues 145–165; it reads VLFLQLAFSSTFFAGLFQASL. Residues 166 to 171 are Cytoplasmic-facing; the sequence is GILRLG. Residues 172 to 192 form a helical membrane-spanning segment; that stretch reads FIIDFLSKATLIGFMGGAAII. Topologically, residues 193–223 are extracellular; it reads VSLQQLKGLLGITHFTKHMSVVPVLSSVFQH. Residues 224–244 form a helical membrane-spanning segment; sequence TNEWSWQTIVMGVCFLLFLLS. Residues 245–256 are Cytoplasmic-facing; the sequence is TRHLSMKKPKLF. The chain crosses the membrane as a helical span at residues 257-277; the sequence is WVSAGAPLLSVIVSTLLVFVF. The Extracellular portion of the chain corresponds to 278-309; sequence RAERHGISVIGKLPEGLNPPSWNMLQFHGSHL. The chain crosses the membrane as a helical span at residues 310–330; that stretch reads ALVAKTGLVTGIVSLTEGIAV. At 331-347 the chain is on the cytoplasmic side; it reads GRTFAALKNYHVDGNKE. The helical transmembrane segment at 348–368 threads the bilayer; that stretch reads MIAIGLMNVVGSATSCYVTTG. The Extracellular segment spans residues 369–384; the sequence is AFSRSAVNNNAGAKTA. Residues 385–405 traverse the membrane as a helical segment; it reads VSNIVMSVTVMVTLLFLMPLF. Over 406-410 the chain is Cytoplasmic; it reads EYTPN. A helical membrane pass occupies residues 411–431; that stretch reads VVLGAIIVTAVIGLIDLPAAC. At 432–441 the chain is on the extracellular side; the sequence is HIWKIDKFDF. The chain crosses the membrane as a helical span at residues 442–462; it reads LVMLCAFFGVIFLSVQNGLAI. Over 463–631 the chain is Cytoplasmic; the sequence is AVGLSLFKIL…SLKGPSLSNV (169 aa). The 125-residue stretch at 497 to 621 folds into the STAS domain; that stretch reads HYKEAQRIPG…LTVAEAVASL (125 aa).

It belongs to the SLC26A/SulP transporter (TC 2.A.53) family. Expressed only in leaves.

The protein localises to the membrane. In terms of biological role, h(+)/sulfate cotransporter that may play a role in the regulation of sulfate assimilation. The sequence is that of Probable sulfate transporter 3.3 (SULTR3;3) from Arabidopsis thaliana (Mouse-ear cress).